The following is a 206-amino-acid chain: CASP-like protein 4B2 (206 aa).

2 stretches are compositionally biased toward low complexity: residues 1–12 (MAMVPADADAAA) and 24–36 (SSQN…AAAA). A disordered region spans residues 1–42 (MAMVPADADAAAKPPPDVEKPDYSSQNGAPNSAAAAAGGGGG). The Cytoplasmic segment spans residues 1–60 (MAMVPADADAAAKPPPDVEKPDYSSQNGAPNSAAAAAGGGGGGVVDSVVARWRREDMLDK). The chain crosses the membrane as a helical span at residues 61 to 81 (SPLALHAAAAAFAFVALVLVA). Topologically, residues 82–99 (SNQHGDWMEFDRYQEYRY) are extracellular. A helical membrane pass occupies residues 100–120 (LLAIAALAFAYSLAQALRHAL). Residues 121-138 (RMRRGVDPVPTASGRLLD) lie on the Cytoplasmic side of the membrane. The helical transmembrane segment at 139–159 (FASDQVVAYLLMSALSAATPI) threads the bilayer. Topologically, residues 160–174 (TNRMRSAVINRFTDT) are extracellular. A helical membrane pass occupies residues 175-195 (TAAAISMAFLAFVSLALSAIV). The Cytoplasmic segment spans residues 196 to 206 (SGYKLSKQTYM).

Belongs to the Casparian strip membrane proteins (CASP) family. As to quaternary structure, homodimer and heterodimers.

The protein localises to the cell membrane. This chain is CASP-like protein 4B2, found in Oryza sativa subsp. japonica (Rice).